The primary structure comprises 362 residues: 3-isopropylmalate dehydrogenase (362 aa).

76–87 (GPKWGTGSVRPE) is a binding site for NAD(+). The substrate site is built by Arg94, Arg104, Arg133, and Asp222. Mg(2+) is bound by residues Asp222, Asp247, and Asp251. Residue 286–297 (GSAPDLGPGKVN) participates in NAD(+) binding.

The protein belongs to the isocitrate and isopropylmalate dehydrogenases family. As to quaternary structure, homodimer. Mg(2+) is required as a cofactor. Mn(2+) serves as cofactor.

It is found in the cytoplasm. It catalyses the reaction (2R,3S)-3-isopropylmalate + NAD(+) = 4-methyl-2-oxopentanoate + CO2 + NADH. It functions in the pathway amino-acid biosynthesis; L-leucine biosynthesis; L-leucine from 3-methyl-2-oxobutanoate: step 3/4. Catalyzes the oxidation of 3-carboxy-2-hydroxy-4-methylpentanoate (3-isopropylmalate) to 3-carboxy-4-methyl-2-oxopentanoate. The product decarboxylates to 4-methyl-2 oxopentanoate. The sequence is that of 3-isopropylmalate dehydrogenase (LEU2) from Pichia angusta (Yeast).